A 387-amino-acid polypeptide reads, in one-letter code: Acetylornithine aminotransferase (387 aa).

Residues 97–98 (GT) and phenylalanine 130 contribute to the pyridoxal 5'-phosphate site. Arginine 133 provides a ligand contact to N(2)-acetyl-L-ornithine. Residue 215-218 (DEVQ) participates in pyridoxal 5'-phosphate binding. At lysine 244 the chain carries N6-(pyridoxal phosphate)lysine. Position 273 (threonine 273) interacts with pyridoxal 5'-phosphate.

It belongs to the class-III pyridoxal-phosphate-dependent aminotransferase family. ArgD subfamily. Homodimer. It depends on pyridoxal 5'-phosphate as a cofactor.

Its subcellular location is the cytoplasm. It catalyses the reaction N(2)-acetyl-L-ornithine + 2-oxoglutarate = N-acetyl-L-glutamate 5-semialdehyde + L-glutamate. It participates in amino-acid biosynthesis; L-arginine biosynthesis; N(2)-acetyl-L-ornithine from L-glutamate: step 4/4. The chain is Acetylornithine aminotransferase from Clostridium acetobutylicum (strain ATCC 824 / DSM 792 / JCM 1419 / IAM 19013 / LMG 5710 / NBRC 13948 / NRRL B-527 / VKM B-1787 / 2291 / W).